We begin with the raw amino-acid sequence, 312 residues long: Pectinesterase inhibitor 10 (312 aa).

Positions 1 to 25 are cleaved as a signal peptide; sequence MNILSQTQILHLSIAILLFITTSSS. Composition is skewed to low complexity over residues 24 to 36 and 44 to 55; these read SSSL…SPSL and SPSSAPPSSLSP. The tract at residues 24–141 is disordered; the sequence is SSSLSPSSSS…PSSSSSTYSN (118 aa). A compositionally biased stretch (pro residues) spans 56–75; the sequence is SSPPPLSLSPSSPPPPPPSS. Composition is skewed to low complexity over residues 76–85 and 93–104; these read SPLSSLSPSL and SPSSAPPSSLSP. Residues 105-124 show a composition bias toward pro residues; the sequence is SSPPPLSLSPSSPPPPPPSS. Positions 125–137 are enriched in low complexity; it reads SPLSSLSPSSSSS. Asparagine 141, asparagine 153, asparagine 185, and asparagine 200 each carry an N-linked (GlcNAc...) asparagine glycan. Cysteine 152 and cysteine 161 are oxidised to a cystine. A disulfide bridge connects residues cysteine 218 and cysteine 268.

It belongs to the PMEI family.

The protein localises to the secreted. Its subcellular location is the extracellular space. It is found in the apoplast. Functionally, pectin methylesterase (PME) inhibitor involved in the maintenance of cell wall integrity in response to necrotrophic pathogens. Modulates PME activity and pectin methylesterification during infection by Botrytis cinerea and contributes to resistance against the pathogen. This is Pectinesterase inhibitor 10 from Arabidopsis thaliana (Mouse-ear cress).